The primary structure comprises 339 residues: DNA-directed RNA polymerase subunit alpha (339 aa).

An alpha N-terminal domain (alpha-NTD) region spans residues 1-235 (MTIQKNWQEL…DQLNVFVNFE (235 aa)). The alpha C-terminal domain (alpha-CTD) stretch occupies residues 251–339 (FNPAFLKKVD…ELAKRFEDHY (89 aa)).

Belongs to the RNA polymerase alpha chain family. Homodimer. The RNAP catalytic core consists of 2 alpha, 1 beta, 1 beta' and 1 omega subunit. When a sigma factor is associated with the core the holoenzyme is formed, which can initiate transcription.

The enzyme catalyses RNA(n) + a ribonucleoside 5'-triphosphate = RNA(n+1) + diphosphate. Its function is as follows. DNA-dependent RNA polymerase catalyzes the transcription of DNA into RNA using the four ribonucleoside triphosphates as substrates. This is DNA-directed RNA polymerase subunit alpha from Rhodopseudomonas palustris (strain HaA2).